The sequence spans 484 residues: Chromosomal replication initiator protein DnaA (484 aa).

A domain I, interacts with DnaA modulators region spans residues Met-1 to Thr-73. The tract at residues Thr-73–Pro-140 is domain II. Residues Phe-141–Ile-357 form a domain III, AAA+ region region. 4 residues coordinate ATP: Gly-185, Gly-187, Lys-188, and Thr-189. The domain IV, binds dsDNA stretch occupies residues Asp-358 to Lys-484.

The protein belongs to the DnaA family. In terms of assembly, oligomerizes as a right-handed, spiral filament on DNA at oriC.

Its subcellular location is the cytoplasm. Plays an essential role in the initiation and regulation of chromosomal replication. ATP-DnaA binds to the origin of replication (oriC) to initiate formation of the DNA replication initiation complex once per cell cycle. Binds the DnaA box (a 9 base pair repeat at the origin) and separates the double-stranded (ds)DNA. Forms a right-handed helical filament on oriC DNA; dsDNA binds to the exterior of the filament while single-stranded (ss)DNA is stabiized in the filament's interior. The ATP-DnaA-oriC complex binds and stabilizes one strand of the AT-rich DNA unwinding element (DUE), permitting loading of DNA polymerase. After initiation quickly degrades to an ADP-DnaA complex that is not apt for DNA replication. Binds acidic phospholipids. This Borrelia hermsii (strain HS1 / DAH) protein is Chromosomal replication initiator protein DnaA.